Reading from the N-terminus, the 493-residue chain is Beta-hexosaminidase Amuc_2018 (493 aa).

Residues methionine 1–alanine 21 form the signal peptide. Arginine 122 contacts substrate. Residues aspartate 151 and histidine 214 each act as charge relay system in the active site. Positions 227 and 247 each coordinate Zn(2+). Aspartate 278 serves as a coordination point for substrate. Glutamate 279 (charge relay system) is an active-site residue. 2 residues coordinate Zn(2+): cysteine 288 and cysteine 291. Residues tryptophan 345, tyrosine 373–aspartate 375, and tryptophan 421–glutamate 423 contribute to the substrate site.

This sequence belongs to the glycosyl hydrolase 20 family.

The enzyme catalyses Hydrolysis of terminal non-reducing N-acetyl-D-hexosamine residues in N-acetyl-beta-D-hexosaminides.. Significantly inhibited by the addition of sodium dodecyl sulfate (SDS), but not by EDTA, urea, 2-mercaptoethanol or Triton X-100. Strongly inhibited by Cu2(+) ions, in case of which the activity is decreased by 70%. No significant inhibition with Al(3+), Fe(3+), Ca(2+), Cd(2+), Mg(2+), Mn(2+), Ni(2+) and Zn(2+) ions. Strongly inhibited by PugNAc (O-(2-acetamido-2-deoxy-D-glucopyranosylideneamino) N-phenylcarbamate) in the sub-micromolar concentration range. PugNAc at a concentration of 0.5 mM decreases the activity by 50% and the addition of 1 mM PugNAc fully inhibits the enzyme. No significant reduction in the activity by alkylation using N-ethylmaleimide or 2-iodoacetamide. Functionally, hydrolyzes terminal GlcNAc residues from terminally unbranched N-glycans and from chitobiose. Hydrolyzes beta-1,6-linked N-acetylglucosamine and beta-1,4-linked N-acetylgalactosamine from pNP-alpha-GalNAc[beta1,3Gal]beta1,6GlcNAc and pNP-beta-GlcNAc-beta1,4-GalNAc substrates, respectively, as well as beta-1,2-linked N-acetylglucosamine units from the non-reducing end of N-glycans. Hydrolyzes GlcNAc residues linked to alpha1,3- or alpha1,6-mannose branch, but has low activity on substrates with more than one GlcNAc residue on one of the mannose branches. Releases terminal GlcNAc moieties from the N-glycopeptide Gly-Glu-Asn-(GlcNAc2Man3GlcNAc2)-Arg with high efficiency. Has moderate hydrolytic activity on the chitobiose moiety of N-glycopeptide substrate Gly-Glu-Asn-(GlcNAc2)-Arg. Does not hydrolyze GlcNAc residues from N-glycan structures bearing a bisecting GlcNAc moiety (beta1,4-linked GlcNAc to the beta1,4-linked core mannose). Potentially capable of cleaving the specific glycoside linkages in the process of mucin degradation in human intestinal tract. Hydrolyzes synthetic substrate pNP-beta-GlcNAc with high activity and pNP-beta-GalNAc to a lesser extent. Does not hydrolyze pNP-beta-glucose, pNP-beta-galactose, pNP-alpha-glucose, pNP-alpha-galactose, pNP-alpha-GlcNAc or pNP-alpha-fucose. The sequence is that of Beta-hexosaminidase Amuc_2018 from Akkermansia muciniphila (strain ATCC BAA-835 / DSM 22959 / JCM 33894 / BCRC 81048 / CCUG 64013 / CIP 107961 / Muc).